The primary structure comprises 842 residues: Glucans biosynthesis glucosyltransferase H (842 aa).

7 helical membrane passes run I140 to L160, I194 to M214, V513 to L533, I568 to L588, V615 to G635, F656 to L676, and F680 to I700.

It belongs to the glycosyltransferase 2 family. OpgH subfamily.

It is found in the cell inner membrane. It functions in the pathway glycan metabolism; osmoregulated periplasmic glucan (OPG) biosynthesis. Its function is as follows. Involved in the biosynthesis of osmoregulated periplasmic glucans (OPGs). The sequence is that of Glucans biosynthesis glucosyltransferase H from Klebsiella pneumoniae subsp. pneumoniae (strain ATCC 700721 / MGH 78578).